Here is a 218-residue protein sequence, read N- to C-terminus: TPA-induced transmembrane protein homolog (218 aa).

Residues methionine 1 to tryptophan 54 are disordered. The chain crosses the membrane as a helical span at residues lysine 66–leucine 86.

The protein localises to the endoplasmic reticulum membrane. The chain is TPA-induced transmembrane protein homolog from Mus musculus (Mouse).